Reading from the N-terminus, the 112-residue chain is UPF0102 protein CHAB381_0216 (112 aa).

This sequence belongs to the UPF0102 family.

This chain is UPF0102 protein CHAB381_0216, found in Campylobacter hominis (strain ATCC BAA-381 / DSM 21671 / CCUG 45161 / LMG 19568 / NCTC 13146 / CH001A).